Here is a 400-residue protein sequence, read N- to C-terminus: F-box/LRR-repeat protein 14 (400 aa).

The region spanning 2-48 is the F-box domain; it reads ETHISCLFPELLAMIFGYLDVRDKGRAAQVCTAWRDAAYHKSVWRGV. The tract at residues 2–48 is required for down-regulation of SNAI1; the sequence is ETHISCLFPELLAMIFGYLDVRDKGRAAQVCTAWRDAAYHKSVWRGV. LRR repeat units follow at residues 144 to 163, 170 to 191, 203 to 225, 229 to 250, and 254 to 275; these read GLEVLELGGCSNITNTGLLL, RLKSLNLRSCRHLSDVGIGHLA, GLEQLTLQDCQKLTDLSLKHISR, GLRLLNLSFCGGISDAGLLHLS, and SLRSLNLRSCDNISDTGIMHLA.

Part of a SCF (SKP1-cullin-F-box) ubiquitin-protein ligase complex. Interacts with SKP1 and CUL1. Interacts with SNAI1; the interaction requires the phosphorylation of the two serine residues in the substrate destruction motif D-S-G-X(2,3,4)-S.

The protein localises to the cytoplasm. Functionally, substrate-recognition component of some SCF (SKP1-CUL1-F-box protein)-type E3 ubiquitin-protein ligase complexes. The SCF(FBXL14) complex acts by mediating ubiquitination and subsequent degradation of SNAI1. The polypeptide is F-box/LRR-repeat protein 14 (FBXL14) (Bos taurus (Bovine)).